Here is a 199-residue protein sequence, read N- to C-terminus: MFISFEGTEGVGKTTLIRKIHQHFEEQGKQVVLTREPGGTPLAEQIRSMLLAVNHDENMSHDTELLLIYAARAQHLQQVILPALESNKIVLSDRFTDASFAYQCSGRGLSQDKLQLLNQNFVSRMPEVTFWLDAPIELGMNRARERGALDRFEQEKLSFFTKVREGYETLWKAEPERIKRLDATQSPDQVFEQALQYLA.

7-14 (GTEGVGKT) contributes to the ATP binding site.

It belongs to the thymidylate kinase family.

It catalyses the reaction dTMP + ATP = dTDP + ADP. Phosphorylation of dTMP to form dTDP in both de novo and salvage pathways of dTTP synthesis. The polypeptide is Thymidylate kinase (Acinetobacter baumannii (strain ACICU)).